Consider the following 710-residue polypeptide: MNPIIKKFQYGNQTVTLETGRIARQATGAVLVSIGEVAVLCTVVGAKEASPGQDFFPLSVHYQEKAYAAGRIPGGYFKREGRPSEKETLTSRLIDRPIRPLFPEGFLNEVQVICTVVSTDKKQDPDIAAMIGTSAALAVSGIPFNGPIGAARVGYTQGEGYILNPSYKQLETSELDMVVAGTKDAVLMVESEAKELPEDIMLGAVLYGHQEMQAVIQACAELARDAGKARWDWQPVPENTELKTAIKAAFGVAIGDAYRITDKAERYNRLGELRSEAVAQFATEESGISADAVKSLFGTLEYNIVRSRIVANEPRIDGRDNKTVRPITVDVGVLPKAHGSALFTRGETQALVVATLGNARDVQIIDQLEGEKKEAFLLHYNFPPYSVGECGRMGSTGRREIGHGRLAKRGVQAVLPKAESFPYTLRVVSEITESNGSSSMASVCGSSLALMDAGVPLKAPVAGIAMGLVKEDNGFAVLTDILGDEDHLGDMDFKVAGTTSGVTALQMDIKIEGITEEIMEIALEQALAARLHILGEMNKVLSQSRTAVSENAPRFETIKIHPDKIRDIIGKGGATIRSITEETNSSIDIDDDGTVKVYADDNEALQAALNRIGAIVAEAEIGAIYEGTVVRIVDFGAFVNFLPGKDGLVHISQIADERVNNVSDYLKEGQVVKVKCLDVDQRGRIKLSIKEALAEEAGTAPAAEPVADAE.

The Mg(2+) site is built by D486 and D492. The region spanning 553 to 612 (PRFETIKIHPDKIRDIIGKGGATIRSITEETNSSIDIDDDGTVKVYADDNEALQAALNRI) is the KH domain. An S1 motif domain is found at 622-690 (GAIYEGTVVR…QRGRIKLSIK (69 aa)).

The protein belongs to the polyribonucleotide nucleotidyltransferase family. As to quaternary structure, component of the RNA degradosome, which is a multiprotein complex involved in RNA processing and mRNA degradation. Mg(2+) serves as cofactor.

It is found in the cytoplasm. It catalyses the reaction RNA(n+1) + phosphate = RNA(n) + a ribonucleoside 5'-diphosphate. In terms of biological role, involved in mRNA degradation. Catalyzes the phosphorolysis of single-stranded polyribonucleotides processively in the 3'- to 5'-direction. The chain is Polyribonucleotide nucleotidyltransferase from Cellvibrio japonicus (strain Ueda107) (Pseudomonas fluorescens subsp. cellulosa).